The sequence spans 397 residues: UDP-GlcNAc:betaGal beta-1,3-N-acetylglucosaminyltransferase 8 (397 aa).

At 1 to 6 (MRCPKC) the chain is on the cytoplasmic side. A helical; Signal-anchor for type II membrane protein transmembrane segment spans residues 7 to 23 (LLCLSALLTLLGLKVYI). Residues 24 to 397 (EWTSESRLSK…KQLQDPRLQC (374 aa)) are Lumenal-facing. Positions 33-58 (KAYPSPRGTPPSPTPANPEPTLPANL) are disordered. A compositionally biased stretch (pro residues) spans 39–53 (RGTPPSPTPANPEPT). Asn-57 carries an N-linked (GlcNAc...) asparagine glycan.

Belongs to the glycosyltransferase 31 family. In terms of assembly, interacts with B3GNT2; this interaction greatly increases B3GNT2 catalytic activity, independently of B3GNT8 enzymatic activity. As to expression, highly expressed in small intestine, pancreas, spleen, bone marrow, lung, throat, and ileum, and weakly in fetal brain, cerebellum, heart, liver, tongue, breast, uteri, and testis. Not detected in colon. Differentially expressed in human tumor cell lines.

Its subcellular location is the golgi apparatus membrane. The protein operates within protein modification; protein glycosylation. In terms of biological role, beta-1,3-N-acetylglucosaminyltransferase that plays a role in the elongation of specific branch structures of multiantennary N-glycans. Has strong activity towards tetraantennary N-glycans and 2,6 triantennary glycans. The polypeptide is UDP-GlcNAc:betaGal beta-1,3-N-acetylglucosaminyltransferase 8 (Homo sapiens (Human)).